Consider the following 62-residue polypeptide: UPF0434 protein ASA_1553 (62 aa).

The protein belongs to the UPF0434 family.

This Aeromonas salmonicida (strain A449) protein is UPF0434 protein ASA_1553.